A 226-amino-acid polypeptide reads, in one-letter code: UPF0758 protein SE_1336 (226 aa).

The MPN domain occupies 102–224 (QITHPSDVAS…FTSLVEAGYF (123 aa)). The Zn(2+) site is built by H173, H175, and D186. Residues 173-186 (HNHPSGDVTPSKED) carry the JAMM motif motif.

The protein belongs to the UPF0758 family.

The protein is UPF0758 protein SE_1336 of Staphylococcus epidermidis (strain ATCC 12228 / FDA PCI 1200).